Reading from the N-terminus, the 361-residue chain is G-protein coupled receptor 52 (361 aa).

Residues 1–44 (MNDSRWTEWRILNTSSGILNVSERHSCPLGFGHYSAVDVCIFET) are Extracellular-facing. 3 N-linked (GlcNAc...) asparagine glycosylation sites follow: Asn2, Asn13, and Asn20. A helical membrane pass occupies residues 45-65 (IVIVLLTFLIIAGNLTVIFVF). The Cytoplasmic portion of the chain corresponds to 66–87 (HCAPLLHHYTTSYFIQTMAYAD). A helical membrane pass occupies residues 88–108 (LFVGVSCLVPTLSLLHYSTGI). Over 109-115 (HESLTCQ) the chain is Extracellular. Cysteines 114 and 193 form a disulfide. The helical transmembrane segment at 116–136 (VFGYIISVLKSVSMACLACIS) threads the bilayer. At 137–159 (VDRYLAITKPLSYNQLVTPCRLR) the chain is on the cytoplasmic side. Residues 160-180 (ICIILIWIYSCLIFLPSFFGW) traverse the membrane as a helical segment. Topologically, residues 181–200 (GKPGYHGDIFEWCATSWLTS) are extracellular. A helical membrane pass occupies residues 201 to 221 (AYFTGFIVCLLYAPAALVVCF). Residues 222–265 (TYFHIFKICRQHTKEINDRRARFPSHEAAASRDAGHSPDRRYAM) lie on the Cytoplasmic side of the membrane. A helical transmembrane segment spans residues 266–286 (VLFRITSVFYMLWLPYIIYFL). Over 287–296 (LESSRVLDNP) the chain is Extracellular. A helical membrane pass occupies residues 297–317 (TLSFLTTWLAISNSFCNCVIY). Residues 318–361 (SLSNSVFRLGLRRLSETMCTSCMCVKDKEARDPKPRKRANSCSI) lie on the Cytoplasmic side of the membrane.

Belongs to the G-protein coupled receptor 1 family.

The protein resides in the cell membrane. Its function is as follows. G- protein coupled receptor activated by antipsychotics reserpine leading to an increase in intracellular cAMP and its internalization. May play a role in locomotor activity through modulation of dopamine, NMDA and ADORA2A-induced locomotor activity. These behavioral changes are accompanied by modulation of the dopamine receptor signaling pathway in striatum. Modulates HTT level via cAMP-dependent but PKA independent mechanisms throught activation of RAB39B that translocates HTT to the endoplasmic reticulum, thus avoiding proteasome degradation. The chain is G-protein coupled receptor 52 from Bos taurus (Bovine).